A 237-amino-acid polypeptide reads, in one-letter code: MEDLQTQMKEAVAKAAIEQIHDGMVLGLGSGSTAALMIKALGAKISSGHLKDIVGVTTSFQGEVLATELGIPLQGLSAVSQIDLAIDGADEVDSNFQLIKGGGACHVQEKLVASLAERFVVVVDSSKIVKTLNLTFKLPVEVLPSAWQLVKNKIHEIGGVSQLRMAQKKAGPIVTDQGNLVLDVTFAGGINDPQTLEKQINNIPGVLENGLFVNLADEVLVGEIVSGTPGVKSLQKI.

Residues 30-33 (SGST), 87-90 (DGAD), and 100-103 (KGGG) each bind substrate. Residue Glu-109 is the Proton acceptor of the active site. Residue Lys-127 coordinates substrate.

It belongs to the ribose 5-phosphate isomerase family. Homodimer.

It catalyses the reaction aldehydo-D-ribose 5-phosphate = D-ribulose 5-phosphate. The protein operates within carbohydrate degradation; pentose phosphate pathway; D-ribose 5-phosphate from D-ribulose 5-phosphate (non-oxidative stage): step 1/1. Its function is as follows. Catalyzes the reversible conversion of ribose-5-phosphate to ribulose 5-phosphate. The chain is Ribose-5-phosphate isomerase A from Prochlorococcus marinus (strain MIT 9211).